The primary structure comprises 508 residues: UBX domain-containing protein 4 (508 aa).

The interval 1–200 (MLWFQGAIPA…PAEDLNIRVE (200 aa)) is interaction with UBQLN1. Topologically, residues 1–413 (MLWFQGAIPA…VHSSSGDIWT (413 aa)) are cytoplasmic. Composition is skewed to polar residues over residues 117-151 (SETSVANGSQSESSVSTPSASFEPNNTCENSQSRN) and 160-187 (TSDTKSDTATGGESAGHATSSQEPSGCS). Positions 117–196 (SETSVANGSQ…SDQRPAEDLN (80 aa)) are disordered. A UBX domain is found at 315–393 (ERSTVARIQF…ELAPSASVVL (79 aa)). An intramembrane segment occupies 414–434 (LLGTVLYPFLAIWRLISNFLF). At 435–508 (SNPPPTQTSV…TWNGNSTQQM (74 aa)) the chain is on the cytoplasmic side. Residues 440-508 (TQTSVRVTSS…TWNGNSTQQM (69 aa)) form a disordered region. Polar residues predominate over residues 441-458 (QTSVRVTSSEPPNPASSS). Positions 459–491 (KSEKREPVRKRVLEKRGDDFKKEGKIYRLRTQD) are enriched in basic and acidic residues. Phosphothreonine is present on threonine 489. Over residues 498–508 (NTWNGNSTQQM) the composition is skewed to polar residues.

In terms of assembly, directly interacts with VCP. Interacts with UBQLN1. Forms a complex with VCP and UBQLN1. Expressed in many tissues, including heart, brain, placenta, lung, liver, skeletal muscle, kidney and pancreas. Accumulates in Alzheimer disease-afflicted brains (at protein level).

Its subcellular location is the endoplasmic reticulum membrane. The protein localises to the nucleus envelope. Functionally, involved in endoplasmic reticulum-associated protein degradation (ERAD). Acts as a platform to recruit both UBQLN1 and VCP to the ER during ERAD. This is UBX domain-containing protein 4 (UBXN4) from Homo sapiens (Human).